Reading from the N-terminus, the 526-residue chain is Cholesterol side-chain cleavage enzyme, mitochondrial (526 aa).

Residues 1–36 (MLAKGLCLRSVLVKSCQPFLSPVWQGPGLATGNGAG) constitute a mitochondrion transit peptide. Cys-459 is a heme binding site.

The protein belongs to the cytochrome P450 family. As to quaternary structure, interacts with FDX1/adrenodoxin. The cofactor is heme. In terms of tissue distribution, expressed in the kidney where it localizes to the distal convoluted tubule and the thick ascending limb of the loop of Henle (at protein level). In the ovary, highly expressed in interstitial cells (at protein level). Also expressed in adrenal gland and testis.

Its subcellular location is the mitochondrion inner membrane. It carries out the reaction 6 reduced [adrenodoxin] + cholesterol + 3 O2 + 6 H(+) = 4-methylpentanal + pregnenolone + 6 oxidized [adrenodoxin] + 4 H2O. The catalysed reaction is 2 reduced [adrenodoxin] + cholesterol + O2 + 2 H(+) = (22R)-hydroxycholesterol + 2 oxidized [adrenodoxin] + H2O. It catalyses the reaction (22R)-hydroxycholesterol + 2 reduced [adrenodoxin] + O2 + 2 H(+) = (20R,22R)-20,22-dihydroxycholesterol + 2 oxidized [adrenodoxin] + H2O. The enzyme catalyses (20R,22R)-20,22-dihydroxycholesterol + 2 reduced [adrenodoxin] + O2 + 2 H(+) = 4-methylpentanal + pregnenolone + 2 oxidized [adrenodoxin] + 2 H2O. Its pathway is lipid metabolism; C21-steroid hormone metabolism. It functions in the pathway steroid metabolism; cholesterol metabolism. Its function is as follows. A cytochrome P450 monooxygenase that catalyzes the side-chain hydroxylation and cleavage of cholesterol to pregnenolone, the precursor of most steroid hormones. Catalyzes three sequential oxidation reactions of cholesterol, namely the hydroxylation at C22 followed with the hydroxylation at C20 to yield 20R,22R-hydroxycholesterol that is further cleaved between C20 and C22 to yield the C21-steroid pregnenolone and 4-methylpentanal. Mechanistically, uses molecular oxygen inserting one oxygen atom into a substrate and reducing the second into a water molecule. Two electrons are provided by NADPH via a two-protein mitochondrial transfer system comprising flavoprotein FDXR (adrenodoxin/ferredoxin reductase) and nonheme iron-sulfur protein FDX1 or FDX2 (adrenodoxin/ferredoxin). The sequence is that of Cholesterol side-chain cleavage enzyme, mitochondrial from Rattus norvegicus (Rat).